The following is a 767-amino-acid chain: Photosystem I P700 chlorophyll a apoprotein A1 (767 aa).

Residues 1–22 (MTISPPESGEKDKKILESPVKA) form a disordered region. Basic and acidic residues predominate over residues 8-22 (SGEKDKKILESPVKA). The next 8 helical transmembrane spans lie at 76-99 (IFSAHFGHLAVIFIWMSAAFFHGA), 162-185 (LMALAIGAVVMAALMLHAGIFHYH), 201-225 (LNHHIAGLVGLGSLAWAGHCIHIGA), 309-327 (VSHHHLAFGVIAIIGGHMY), 368-391 (RHAQLSVNLAMLGSLSILISHHMY), 407-433 (LGLFTHHMWIGGLFIVGAGAHAGIAMV), 455-477 (ALISHLNWVCMWLGFHSFGLYIH), and 558-576 (LMIHHIHAFQIHVTVLILL). 2 residues coordinate [4Fe-4S] cluster: Cys-600 and Cys-609. Transmembrane regions (helical) follow at residues 616 to 637 (HVFLGLFWMYNCLSIVIFHFSW) and 681 to 703 (ISMYGLMFLGAHFIWAFSLMFLF). His-692 is a divinylchlorophyll a' binding site. Divinyl chlorophyll a-binding residues include Met-700 and Tyr-708. Trp-709 provides a ligand contact to phylloquinone. Residues 741–761 (AVGVTHFLVGGIATTWAFFHA) form a helical membrane-spanning segment.

This sequence belongs to the PsaA/PsaB family. The PsaA/B heterodimer binds the P700 divinyl chlorophyll special pair and subsequent electron acceptors. PSI consists of a core antenna complex that captures photons, and an electron transfer chain that converts photonic excitation into a charge separation. The cyanobacterial PSI reaction center is composed of one copy each of PsaA,B,C,D,E,F,I,J,K,L,M and X, and forms trimeric complexes. It depends on PSI electron transfer chain: 5 divinyl chlorophyll a, 1 divinyl chlorophyll a', 2 phylloquinones and 3 4Fe-4S clusters. PSI core antenna: 90 divinyl chlorophyll a, 22 carotenoids, 3 phospholipids and 1 galactolipid. P700 is a divinyl chlorophyll a/divinyl chlorophyll a' dimer, A0 is one or more divinyl chlorophyll a, A1 is one or both phylloquinones and FX is a shared 4Fe-4S iron-sulfur center. as a cofactor.

Its subcellular location is the cellular thylakoid membrane. It carries out the reaction reduced [plastocyanin] + hnu + oxidized [2Fe-2S]-[ferredoxin] = oxidized [plastocyanin] + reduced [2Fe-2S]-[ferredoxin]. Functionally, psaA and PsaB bind P700, the primary electron donor of photosystem I (PSI), as well as the electron acceptors A0, A1 and FX. PSI is a plastocyanin/cytochrome c6-ferredoxin oxidoreductase, converting photonic excitation into a charge separation, which transfers an electron from the donor P700 chlorophyll pair to the spectroscopically characterized acceptors A0, A1, FX, FA and FB in turn. Oxidized P700 is reduced on the lumenal side of the thylakoid membrane by plastocyanin or cytochrome c6. This is Photosystem I P700 chlorophyll a apoprotein A1 from Prochlorococcus marinus subsp. pastoris (strain CCMP1986 / NIES-2087 / MED4).